The primary structure comprises 131 residues: Profilin-4 (131 aa).

C13 and C115 are joined by a disulfide. The Involved in PIP2 interaction signature appears at 81 to 97 (AVIRGKKGAGGITIKKT). T111 carries the phosphothreonine modification.

The protein belongs to the profilin family. As to quaternary structure, occurs in many kinds of cells as a complex with monomeric actin in a 1:1 ratio. Phosphorylated by MAP kinases.

Its subcellular location is the cytoplasm. It localises to the cytoskeleton. In terms of biological role, binds to actin and affects the structure of the cytoskeleton. At high concentrations, profilin prevents the polymerization of actin, whereas it enhances it at low concentrations. In Phleum pratense (Common timothy), this protein is Profilin-4.